Here is a 110-residue protein sequence, read N- to C-terminus: Large ribosomal subunit protein uL22 (110 aa).

This sequence belongs to the universal ribosomal protein uL22 family. Part of the 50S ribosomal subunit.

This protein binds specifically to 23S rRNA; its binding is stimulated by other ribosomal proteins, e.g. L4, L17, and L20. It is important during the early stages of 50S assembly. It makes multiple contacts with different domains of the 23S rRNA in the assembled 50S subunit and ribosome. Its function is as follows. The globular domain of the protein is located near the polypeptide exit tunnel on the outside of the subunit, while an extended beta-hairpin is found that lines the wall of the exit tunnel in the center of the 70S ribosome. This chain is Large ribosomal subunit protein uL22, found in Paraburkholderia phytofirmans (strain DSM 17436 / LMG 22146 / PsJN) (Burkholderia phytofirmans).